We begin with the raw amino-acid sequence, 436 residues long: Probable protein phosphatase 2C 15 (436 aa).

Residues 30–302 form the PPM-type phosphatase domain; the sequence is KAAKMEKPIV…DDTTCIVVDI (273 aa). Positions 78, 79, 254, and 293 each coordinate Mn(2+).

This sequence belongs to the PP2C family. Mg(2+) is required as a cofactor. The cofactor is Mn(2+).

It carries out the reaction O-phospho-L-seryl-[protein] + H2O = L-seryl-[protein] + phosphate. The catalysed reaction is O-phospho-L-threonyl-[protein] + H2O = L-threonyl-[protein] + phosphate. The chain is Probable protein phosphatase 2C 15 from Arabidopsis thaliana (Mouse-ear cress).